Consider the following 124-residue polypeptide: Fluoride-specific ion channel FluC (124 aa).

The next 4 helical transmembrane spans lie at 4–24 (FVLV…LSGV), 35–55 (YGTV…WGIL), 67–87 (LLLL…TYEG), and 100–120 (ALYI…GAGL). Na(+) is bound by residues Gly-75 and Thr-78.

It belongs to the fluoride channel Fluc/FEX (TC 1.A.43) family.

The protein localises to the cell inner membrane. The enzyme catalyses fluoride(in) = fluoride(out). Na(+) is not transported, but it plays an essential structural role and its presence is essential for fluoride channel function. In terms of biological role, fluoride-specific ion channel. Important for reducing fluoride concentration in the cell, thus reducing its toxicity. The sequence is that of Fluoride-specific ion channel FluC from Nitratidesulfovibrio vulgaris (strain ATCC 29579 / DSM 644 / CCUG 34227 / NCIMB 8303 / VKM B-1760 / Hildenborough) (Desulfovibrio vulgaris).